A 376-amino-acid chain; its full sequence is Chaperone protein DnaJ (376 aa).

One can recognise a J domain in the interval 5-70; that stretch reads DYYETLGVQK…EKRAAYDQYG (66 aa). The CR-type zinc finger occupies 133–211; the sequence is GTTKDIKINT…CHGDGRVHKK (79 aa). Residues cysteine 146, cysteine 149, cysteine 163, cysteine 166, cysteine 185, cysteine 188, cysteine 199, and cysteine 202 each contribute to the Zn(2+) site. 4 CXXCXGXG motif repeats span residues 146-153, 163-170, 185-192, and 199-206; these read CDHCDGSG, CPTCHGHG, CPTCQGSG, and CKHCHGDG.

The protein belongs to the DnaJ family. In terms of assembly, homodimer. It depends on Zn(2+) as a cofactor.

Its subcellular location is the cytoplasm. Its function is as follows. Participates actively in the response to hyperosmotic and heat shock by preventing the aggregation of stress-denatured proteins and by disaggregating proteins, also in an autonomous, DnaK-independent fashion. Unfolded proteins bind initially to DnaJ; upon interaction with the DnaJ-bound protein, DnaK hydrolyzes its bound ATP, resulting in the formation of a stable complex. GrpE releases ADP from DnaK; ATP binding to DnaK triggers the release of the substrate protein, thus completing the reaction cycle. Several rounds of ATP-dependent interactions between DnaJ, DnaK and GrpE are required for fully efficient folding. Also involved, together with DnaK and GrpE, in the DNA replication of plasmids through activation of initiation proteins. In Mannheimia succiniciproducens (strain KCTC 0769BP / MBEL55E), this protein is Chaperone protein DnaJ.